Reading from the N-terminus, the 633-residue chain is Pesticidal crystal protein Cry2Aa (633 aa).

The protein belongs to the delta endotoxin family.

Its function is as follows. Promotes colloidosmotic lysis by binding to the midgut epithelial cells of both dipteran (Aedes aegypti) and lepidopteran (Manduca sexta) larvae. The polypeptide is Pesticidal crystal protein Cry2Aa (cry2Aa) (Bacillus thuringiensis subsp. kenyae).